Consider the following 58-residue polypeptide: Short neurotoxin MS11 (58 aa).

4 disulfide bridges follow: Cys3/Cys20, Cys13/Cys38, Cys42/Cys50, and Cys51/Cys56.

Belongs to the three-finger toxin family. Short-chain subfamily. In terms of tissue distribution, expressed by the venom gland.

The protein localises to the secreted. Functionally, produces peripheral paralysis by blocking neuromuscular transmission at the postsynaptic site. Binds to and inhibits the endogenous nicotinic acetylcholine receptors (nAChR) in the human rhabdomyosarcoma TE 671 cell line with an IC(50) of 266 mM. Not toxic to mice by intraperitoneal injection or to zebrafish by injection at the back dorsolateral region. The polypeptide is Short neurotoxin MS11 (Micrurus surinamensis (Surinam coral snake)).